Reading from the N-terminus, the 469-residue chain is Equisetin cluster transcription factor eqxR (469 aa).

A DNA-binding region (zn(2)-C6 fungal-type) is located at residues 13-47; that stretch reads CDRCRSHKLKCTVAPENSRSGSNRCTRCIRAQVTC. The disordered stretch occupies residues 58-84; sequence STNVKKADIKSGTNSQETTSMQASTIV. The span at 68–82 shows a compositional bias: polar residues; the sequence is SGTNSQETTSMQAST.

The protein resides in the nucleus. Transcription factor that regulates the expression of the gene cluster that mediates the biosynthesis of Equisetin. This chain is Equisetin cluster transcription factor eqxR, found in Fusarium heterosporum.